Here is a 156-residue protein sequence, read N- to C-terminus: Small ribosomal subunit protein uS7 (156 aa).

It belongs to the universal ribosomal protein uS7 family. Part of the 30S ribosomal subunit. Contacts proteins S9 and S11.

In terms of biological role, one of the primary rRNA binding proteins, it binds directly to 16S rRNA where it nucleates assembly of the head domain of the 30S subunit. Is located at the subunit interface close to the decoding center, probably blocks exit of the E-site tRNA. The chain is Small ribosomal subunit protein uS7 from Pelagibacter ubique (strain HTCC1062).